Reading from the N-terminus, the 102-residue chain is MHIDIMHYLIVSALMFTIGIAGIFLNRKNVIIILMSIELILLSVNLNFVAFSAFLHDLVGQVFALFILTVAAAEAAIGLAILVVFFRNRGSIAVEDVNVMKG.

A run of 3 helical transmembrane segments spans residues 5-25 (IMHY…GIFL), 31-51 (IIIL…FVAF), and 66-86 (FILT…VVFF).

The protein belongs to the complex I subunit 4L family. NDH-1 is composed of 14 different subunits. Subunits NuoA, H, J, K, L, M, N constitute the membrane sector of the complex.

Its subcellular location is the cell inner membrane. The catalysed reaction is a quinone + NADH + 5 H(+)(in) = a quinol + NAD(+) + 4 H(+)(out). NDH-1 shuttles electrons from NADH, via FMN and iron-sulfur (Fe-S) centers, to quinones in the respiratory chain. The immediate electron acceptor for the enzyme in this species is believed to be ubiquinone. Couples the redox reaction to proton translocation (for every two electrons transferred, four hydrogen ions are translocated across the cytoplasmic membrane), and thus conserves the redox energy in a proton gradient. The protein is NADH-quinone oxidoreductase subunit K of Bartonella henselae (strain ATCC 49882 / DSM 28221 / CCUG 30454 / Houston 1) (Rochalimaea henselae).